The following is a 1317-amino-acid chain: Toxin protein Tse5 (1317 aa).

The interval 395-419 (GRETRRRRDGQGRMLEEESPGKARY) is disordered. Residues 403 to 415 (DGQGRMLEEESPG) are compositionally biased toward basic and acidic residues.

Functionally, toxin secreted by the H1 type VI (H1-T6SS) secretion system that acts on bacterial target cells. The producing bacterium is protected by a cognate immunity protein. The sequence is that of Toxin protein Tse5 from Pseudomonas aeruginosa (strain ATCC 15692 / DSM 22644 / CIP 104116 / JCM 14847 / LMG 12228 / 1C / PRS 101 / PAO1).